The sequence spans 211 residues: Imidazole glycerol phosphate synthase subunit HisH (211 aa).

The Glutamine amidotransferase type-1 domain occupies 4–211 (TVALLDYGSG…QLLRNWINHI (208 aa)). Cysteine 82 functions as the Nucleophile in the catalytic mechanism. Residues histidine 192 and glutamate 194 contribute to the active site.

As to quaternary structure, heterodimer of HisH and HisF.

The protein resides in the cytoplasm. The catalysed reaction is 5-[(5-phospho-1-deoxy-D-ribulos-1-ylimino)methylamino]-1-(5-phospho-beta-D-ribosyl)imidazole-4-carboxamide + L-glutamine = D-erythro-1-(imidazol-4-yl)glycerol 3-phosphate + 5-amino-1-(5-phospho-beta-D-ribosyl)imidazole-4-carboxamide + L-glutamate + H(+). The enzyme catalyses L-glutamine + H2O = L-glutamate + NH4(+). Its pathway is amino-acid biosynthesis; L-histidine biosynthesis; L-histidine from 5-phospho-alpha-D-ribose 1-diphosphate: step 5/9. IGPS catalyzes the conversion of PRFAR and glutamine to IGP, AICAR and glutamate. The HisH subunit catalyzes the hydrolysis of glutamine to glutamate and ammonia as part of the synthesis of IGP and AICAR. The resulting ammonia molecule is channeled to the active site of HisF. This is Imidazole glycerol phosphate synthase subunit HisH from Corynebacterium efficiens (strain DSM 44549 / YS-314 / AJ 12310 / JCM 11189 / NBRC 100395).